Here is a 139-residue protein sequence, read N- to C-terminus: Acidic phospholipase A2 5 (139 aa).

Positions 1–16 are cleaved as a signal peptide; the sequence is MRTLWIVAVWLMGVEG. Disulfide bonds link Cys-42–Cys-131, Cys-44–Cys-60, Cys-59–Cys-111, Cys-65–Cys-139, Cys-66–Cys-104, Cys-73–Cys-97, and Cys-91–Cys-102. 3 residues coordinate Ca(2+): Tyr-43, Gly-45, and Gly-47. His-63 is an active-site residue. A Ca(2+)-binding site is contributed by Asp-64. Residue Asp-105 is part of the active site.

The protein belongs to the phospholipase A2 family. Group II subfamily. D49 sub-subfamily. Ca(2+) serves as cofactor. In terms of tissue distribution, expressed by the venom gland.

It is found in the secreted. It catalyses the reaction a 1,2-diacyl-sn-glycero-3-phosphocholine + H2O = a 1-acyl-sn-glycero-3-phosphocholine + a fatty acid + H(+). Functionally, PLA2 catalyzes the calcium-dependent hydrolysis of the 2-acyl groups in 3-sn-phosphoglycerides. In Echis pyramidum leakeyi (Leakey's carpet viper), this protein is Acidic phospholipase A2 5.